The sequence spans 355 residues: Biotin synthase (355 aa).

The Radical SAM core domain maps to 51–275 (NTVKVNYLVN…VCPDKEIRIA (225 aa)). 3 residues coordinate [4Fe-4S] cluster: Cys-66, Cys-70, and Cys-73. [2Fe-2S] cluster is bound by residues Cys-110, Cys-143, Cys-203, and Arg-273.

The protein belongs to the radical SAM superfamily. Biotin synthase family. In terms of assembly, homodimer. [4Fe-4S] cluster is required as a cofactor. The cofactor is [2Fe-2S] cluster.

The catalysed reaction is (4R,5S)-dethiobiotin + (sulfur carrier)-SH + 2 reduced [2Fe-2S]-[ferredoxin] + 2 S-adenosyl-L-methionine = (sulfur carrier)-H + biotin + 2 5'-deoxyadenosine + 2 L-methionine + 2 oxidized [2Fe-2S]-[ferredoxin]. Its pathway is cofactor biosynthesis; biotin biosynthesis; biotin from 7,8-diaminononanoate: step 2/2. Functionally, catalyzes the conversion of dethiobiotin (DTB) to biotin by the insertion of a sulfur atom into dethiobiotin via a radical-based mechanism. The polypeptide is Biotin synthase (Saccharopolyspora erythraea (strain ATCC 11635 / DSM 40517 / JCM 4748 / NBRC 13426 / NCIMB 8594 / NRRL 2338)).